Here is an 833-residue protein sequence, read N- to C-terminus: Leucine--tRNA ligase (833 aa).

A 'HIGH' region motif is present at residues 41 to 52; it reads PYPSGAGLHVGH. Positions 610 to 614 match the 'KMSKS' region motif; sequence KMSKS. Lys-613 provides a ligand contact to ATP.

This sequence belongs to the class-I aminoacyl-tRNA synthetase family.

The protein localises to the cytoplasm. It catalyses the reaction tRNA(Leu) + L-leucine + ATP = L-leucyl-tRNA(Leu) + AMP + diphosphate. The chain is Leucine--tRNA ligase from Streptococcus agalactiae serotype Ia (strain ATCC 27591 / A909 / CDC SS700).